The following is a 304-amino-acid chain: Xylanase inhibitor protein 1 (304 aa).

The N-terminal stretch at Met1–Ala30 is a signal peptide. One can recognise a GH18 domain in the interval Gly36–Ala304. A disulfide bridge connects residues Cys55 and Cys96. The N-linked (GlcNAc...) asparagine glycan is linked to Asn119. The active-site Proton donor is Glu158. Residues Ile178–Lys184 are interaction with fungal GH11 xylanase. Cys194 and Cys225 are joined by a disulfide. Positions His262–Gln275 are interaction with fungal GH10 xylanase. N-linked (GlcNAc...) asparagine glycosylation is present at Asn295.

This sequence belongs to the glycosyl hydrolase 18 family. Xylanase inhibitor subfamily. Binds to fungal GH10 and GH11 xylanases. Also forms a ternary complex with barley alpha-amylase 1 (AMY1) and insoluble starch.

Its subcellular location is the secreted. Its function is as follows. Fungal xylanase inhibitor. Possesses competitive inhibiting activity against fungal endo-1,4-beta-D-xylanases belonging to glycoside hydrolase family 10 (GH10) and family 11 (GH11). Possesses also inhibitory activity towards barley alpha-amylases. Binding to xylanases or amylases is necessary for inhibition activity. May function in plant defense against secreted fungal pathogen xylanases. Is similar to class III chitinases, but does not exhibit chitinase activity. The polypeptide is Xylanase inhibitor protein 1 (Triticum aestivum (Wheat)).